The chain runs to 397 residues: Pyridinium-3,5-bisthiocarboxylic acid mononucleotide nickel insertion protein (397 aa).

The protein belongs to the LarC family.

The enzyme catalyses Ni(II)-pyridinium-3,5-bisthiocarboxylate mononucleotide = pyridinium-3,5-bisthiocarboxylate mononucleotide + Ni(2+). Its function is as follows. Involved in the biosynthesis of a nickel-pincer cofactor ((SCS)Ni(II) pincer complex). Binds Ni(2+), and functions in nickel delivery to pyridinium-3,5-bisthiocarboxylic acid mononucleotide (P2TMN), to form the mature cofactor. Is thus probably required for the activation of nickel-pincer cofactor-dependent enzymes. The chain is Pyridinium-3,5-bisthiocarboxylic acid mononucleotide nickel insertion protein from Thermotoga petrophila (strain ATCC BAA-488 / DSM 13995 / JCM 10881 / RKU-1).